The chain runs to 342 residues: MVKKNDLFVDVASHQGYDISGILEEAGTTNTIIKVSESTSYLNPCLSAQVSQSNPIGFYHFAWFGGNEEEAEAEARYFLDNVPTQVKYLVLDYEDHASASVQRNTTACLRFMQIIAEAGYTPIYYSYKPFTLDNVDYQQILAQFPNSLWIAGYGLNDGTANFEYFPSMDGIRWWQYSSNPFDKNIVLLDDEKEDNINNENTLKSLTTVANEVIQGLWGNGQERYDSLANAGYDPQAVQDKVNEILNAREIADLTTVANEVIQGLWGNGQERYDSLANAGYDPQAVQDKVNEILNAREIADLTTVANEVIQGLWGNGQERYDSLANAGYDPQAVQDKVNELLS.

In terms of domain architecture, Ch-type lysozyme spans 5–210; that stretch reads NDLFVDVASH…TLKSLTTVAN (206 aa). Active-site residues include Asp10, Asp92, and Glu94. One copy of the 1; truncated repeat lies at 205–242; that stretch reads LTTVANEVIQGLWGNGQERYDSLANAGYDPQAVQDKVN. Residues 205–338 form a 3 X 48 AA tandem repeats region; sequence LTTVANEVIQ…DPQAVQDKVN (134 aa). 2 tandem repeats follow at residues 243 to 290 and 291 to 338.

Belongs to the glycosyl hydrolase 25 family.

The enzyme catalyses Hydrolysis of (1-&gt;4)-beta-linkages between N-acetylmuramic acid and N-acetyl-D-glucosamine residues in a peptidoglycan and between N-acetyl-D-glucosamine residues in chitodextrins.. Its function is as follows. Responsible for the separation of the host daughter cells at the end of cell division and participates in the liberation of progeny bacteriophage into the medium. Degrades cell walls containing either choline or ethanolamine. The chain is Lysozyme (CPL7) from Streptococcus pneumoniae (Bacteriophage Cp-7).